A 586-amino-acid chain; its full sequence is DNA-binding protein RFX8 (586 aa).

The RFX-type winged-helix DNA-binding region spans 22–97 (VIQWLVDNFC…YHYDGICIKK (76 aa)).

This sequence belongs to the RFX family.

The protein localises to the nucleus. In terms of biological role, may be a transcription factor. This chain is DNA-binding protein RFX8 (RFX8), found in Homo sapiens (Human).